Reading from the N-terminus, the 302-residue chain is GTPase Era (302 aa).

Residues 10 to 178 (RCGYVAIVGR…EAQIAKHLPE (169 aa)) form the Era-type G domain. Residues 18 to 25 (GRPNVGKS) form a G1 region. 18–25 (GRPNVGKS) contributes to the GTP binding site. Residues 44–48 (QTTRH) form a G2 region. The G3 stretch occupies residues 65–68 (DTPG). Residues 65–69 (DTPGM) and 127–130 (NKTD) contribute to the GTP site. The G4 stretch occupies residues 127 to 130 (NKTD). The G5 stretch occupies residues 157–159 (ISA). Residues 201-285 (VREKIMRQLG…MLNLWVKVKG (85 aa)) form the KH type-2 domain.

This sequence belongs to the TRAFAC class TrmE-Era-EngA-EngB-Septin-like GTPase superfamily. Era GTPase family. In terms of assembly, monomer.

The protein localises to the cytoplasm. It localises to the cell inner membrane. In terms of biological role, an essential GTPase that binds both GDP and GTP, with rapid nucleotide exchange. Plays a role in 16S rRNA processing and 30S ribosomal subunit biogenesis and possibly also in cell cycle regulation and energy metabolism. The sequence is that of GTPase Era from Pseudomonas putida (strain ATCC 47054 / DSM 6125 / CFBP 8728 / NCIMB 11950 / KT2440).